Here is a 235-residue protein sequence, read N- to C-terminus: Eukaryotic translation initiation factor 4E-1 (235 aa).

A disordered region spans residues 1 to 52; the sequence is MVVEDSMKATSAEDLSNSIANQNPRGRGGDEDEELEEGEIVGDDDLDSSNLS. Polar residues predominate over residues 13 to 24; sequence EDLSNSIANQNP. The span at 30–47 shows a compositional bias: acidic residues; it reads DEDEELEEGEIVGDDDLD. 2 EIF4G-binding regions span residues 60–63 and 70–106; these read HPLE and FDNPSAKSKQATWGASIRPIYTFSTVEEFWSVYNNIH. Residues 78–83, Lys110, and 128–129 contribute to the mRNA site; these read KQATWG and WE. Cysteines 133 and 171 form a disulfide. The tract at residues 154-163 is EIF4G-binding; the sequence is YTLLAMIGEQ. MRNA is bound by residues 178–183 and 223–227; these read RSGQDK and KKFDR.

This sequence belongs to the eukaryotic initiation factor 4E family. EIF4F is a multi-subunit complex, the composition of which varies with external and internal environmental conditions. It is composed of at least EIF4A, EIF4E and EIF4G. EIF4E is also known to interact with other partners. Interacts directly with eIF4G. In higher plants two isoforms of EIF4F have been identified, named isoform EIF4F and isoform EIF(iso)4F. Isoform EIF4F has subunits p220 and p26, whereas isoform EIF(iso)4F has subunits p82 and p28. In terms of assembly, (Microbial infection) Interacts with potyvirus viral genome-linked protein (VPg); this interaction is possible in susceptible hosts but impaired in resistant plants. In terms of processing, according to the redox status, the Cys-133-Cys-171 disulfide bridge may have a role in regulating protein function by affecting its ability to bind capped mRNA.

The protein resides in the nucleus. Its subcellular location is the cytoplasm. Component of the protein complex eIF4F, which is involved in the recognition of the mRNA cap, ATP-dependent unwinding of 5'-terminal secondary structure and recruitment of mRNA to the ribosome. Recognizes and binds the 7-methylguanosine-containing mRNA cap during an early step in the initiation of protein synthesis and facilitates ribosome binding by inducing the unwinding of the mRNAs secondary structures. Key component of recessive resistance to potyviruses and Tombusviridae genus Carmovirus such as melon necrotic spot virus (MNSV). Its function is as follows. (Microbial infection) Susceptibility host factor required for viral infection by recruiting viral RNAs, including uncapped and non-polyadenylated RNA, to the host ribosomal complex via an interaction with viral genome-linked protein (VPg). The protein is Eukaryotic translation initiation factor 4E-1 of Cucumis melo (Muskmelon).